The chain runs to 286 residues: 4-diphosphocytidyl-2-C-methyl-D-erythritol kinase (286 aa).

Residue K11 is part of the active site. ATP is bound at residue 93–103; it reads PFGAGLGGGSS. The active site involves D135.

This sequence belongs to the GHMP kinase family. IspE subfamily.

The catalysed reaction is 4-CDP-2-C-methyl-D-erythritol + ATP = 4-CDP-2-C-methyl-D-erythritol 2-phosphate + ADP + H(+). It participates in isoprenoid biosynthesis; isopentenyl diphosphate biosynthesis via DXP pathway; isopentenyl diphosphate from 1-deoxy-D-xylulose 5-phosphate: step 3/6. Its function is as follows. Catalyzes the phosphorylation of the position 2 hydroxy group of 4-diphosphocytidyl-2C-methyl-D-erythritol. The chain is 4-diphosphocytidyl-2-C-methyl-D-erythritol kinase from Chlorobaculum tepidum (strain ATCC 49652 / DSM 12025 / NBRC 103806 / TLS) (Chlorobium tepidum).